A 293-amino-acid polypeptide reads, in one-letter code: Pyridoxal 5'-phosphate synthase subunit PdxS (293 aa).

Asp23 contributes to the D-ribose 5-phosphate binding site. The active-site Schiff-base intermediate with D-ribose 5-phosphate is the Lys80. Gly152 is a binding site for D-ribose 5-phosphate. D-glyceraldehyde 3-phosphate is bound at residue Arg164. D-ribose 5-phosphate-binding positions include Gly213 and 234-235 (GS).

It belongs to the PdxS/SNZ family. As to quaternary structure, in the presence of PdxT, forms a dodecamer of heterodimers.

The enzyme catalyses aldehydo-D-ribose 5-phosphate + D-glyceraldehyde 3-phosphate + L-glutamine = pyridoxal 5'-phosphate + L-glutamate + phosphate + 3 H2O + H(+). It functions in the pathway cofactor biosynthesis; pyridoxal 5'-phosphate biosynthesis. Its function is as follows. Catalyzes the formation of pyridoxal 5'-phosphate from ribose 5-phosphate (RBP), glyceraldehyde 3-phosphate (G3P) and ammonia. The ammonia is provided by the PdxT subunit. Can also use ribulose 5-phosphate and dihydroxyacetone phosphate as substrates, resulting from enzyme-catalyzed isomerization of RBP and G3P, respectively. In Desulfovibrio desulfuricans (strain ATCC 27774 / DSM 6949 / MB), this protein is Pyridoxal 5'-phosphate synthase subunit PdxS.